A 159-amino-acid polypeptide reads, in one-letter code: S-ribosylhomocysteine lyase (159 aa).

Residues H53, H57, and C124 each contribute to the Fe cation site.

Belongs to the LuxS family. Homodimer. Requires Fe cation as cofactor.

It carries out the reaction S-(5-deoxy-D-ribos-5-yl)-L-homocysteine = (S)-4,5-dihydroxypentane-2,3-dione + L-homocysteine. Its function is as follows. Involved in the synthesis of autoinducer 2 (AI-2) which is secreted by bacteria and is used to communicate both the cell density and the metabolic potential of the environment. The regulation of gene expression in response to changes in cell density is called quorum sensing. Catalyzes the transformation of S-ribosylhomocysteine (RHC) to homocysteine (HC) and 4,5-dihydroxy-2,3-pentadione (DPD). The chain is S-ribosylhomocysteine lyase from Porphyromonas gingivalis (strain ATCC BAA-308 / W83).